We begin with the raw amino-acid sequence, 332 residues long: Putative peptide import ATP-binding protein BMEII0206 (332 aa).

Residues 11-261 enclose the ABC transporter domain; sequence LEVSNLSVDF…PLHPYTEGLL (251 aa). Position 47–54 (47–54) interacts with ATP; that stretch reads GESGSGKS.

This sequence belongs to the ABC transporter superfamily. In terms of assembly, the complex is composed of two ATP-binding proteins (BMEII0205 and BMEII0206), two transmembrane proteins (BMEII0207/BMEII0208 and BMEII0209) and a solute-binding protein (BMEII0210).

It is found in the cell inner membrane. Probably part of an ABC transporter complex that could be involved in peptide import. Probably responsible for energy coupling to the transport system. This is Putative peptide import ATP-binding protein BMEII0206 from Brucella melitensis biotype 1 (strain ATCC 23456 / CCUG 17765 / NCTC 10094 / 16M).